The sequence spans 601 residues: Protein CT_858 (601 aa).

Belongs to the chlamydial CPn_1016/CT_858/TC_0248 family.

This is Protein CT_858 from Chlamydia trachomatis serovar D (strain ATCC VR-885 / DSM 19411 / UW-3/Cx).